The chain runs to 96 residues: UPF0235 protein Ent638_3359 (96 aa).

This sequence belongs to the UPF0235 family.

The chain is UPF0235 protein Ent638_3359 from Enterobacter sp. (strain 638).